The sequence spans 357 residues: Set1 complex component swd2 (357 aa).

4 WD repeats span residues 24-65 (NFVG…KSLA), 110-149 (GHKQ…CQGL), 199-241 (PPHV…RVPS), and 247-289 (TQDG…QTVN).

This sequence belongs to the WD repeat SWD2 family. Component of the Set1 complex composed of ash2, sdc1, set1, shg1, spp1, swd1, swd2 and swd3.

The protein resides in the nucleus. The Set1 complex specifically methylates 'Lys-4' of histone H3. This Schizosaccharomyces pombe (strain 972 / ATCC 24843) (Fission yeast) protein is Set1 complex component swd2.